Reading from the N-terminus, the 482-residue chain is Glycogen synthase (482 aa).

Lys21 contributes to the ADP-alpha-D-glucose binding site.

This sequence belongs to the glycosyltransferase 1 family. Bacterial/plant glycogen synthase subfamily.

It catalyses the reaction [(1-&gt;4)-alpha-D-glucosyl](n) + ADP-alpha-D-glucose = [(1-&gt;4)-alpha-D-glucosyl](n+1) + ADP + H(+). It functions in the pathway glycan biosynthesis; glycogen biosynthesis. Its function is as follows. Synthesizes alpha-1,4-glucan chains using ADP-glucose. This chain is Glycogen synthase, found in Clostridium perfringens (strain 13 / Type A).